Reading from the N-terminus, the 106-residue chain is U1-lycotoxin-Ls1b (106 aa).

The N-terminal stretch at 1–19 (MKVLVVVALLVTLISYSSS) is a signal peptide. The propeptide occupies 20 to 40 (EGIDDPEADELLSLMANEQTR). Intrachain disulfides connect cysteine 43–cysteine 58, cysteine 50–cysteine 67, cysteine 57–cysteine 85, and cysteine 69–cysteine 83.

It belongs to the neurotoxin 19 (CSTX) family. 04 (U1-Lctx) subfamily. As to expression, expressed by the venom gland.

Its subcellular location is the secreted. This Lycosa singoriensis (Wolf spider) protein is U1-lycotoxin-Ls1b.